Reading from the N-terminus, the 376-residue chain is Methionine import ATP-binding protein MetN 1 (376 aa).

The ABC transporter domain maps to Val34–Leu273. Gly70–Ser77 is a binding site for ATP.

This sequence belongs to the ABC transporter superfamily. Methionine importer (TC 3.A.1.24) family. The complex is composed of two ATP-binding proteins (MetN), two transmembrane proteins (MetI) and a solute-binding protein (MetQ).

It localises to the cell inner membrane. It catalyses the reaction L-methionine(out) + ATP + H2O = L-methionine(in) + ADP + phosphate + H(+). It carries out the reaction D-methionine(out) + ATP + H2O = D-methionine(in) + ADP + phosphate + H(+). In terms of biological role, part of the ABC transporter complex MetNIQ involved in methionine import. Responsible for energy coupling to the transport system. The chain is Methionine import ATP-binding protein MetN 1 from Pseudomonas syringae pv. tomato (strain ATCC BAA-871 / DC3000).